Consider the following 506-residue polypeptide: MDLLLLEKTLIGLFFAIIIAIVVSKLRSKKFKLPPGPIPVPVFGNWLQVGDDLNHRNLTEYAKKFGDLFLLRMGQRNLVVVSSPELAKEVLHTQGVEFGSRTRNVVFDIFTGKGQDMVFTVYGEHWRKMRRIMTVPFFTNKVVQQYRGGWEDEVAHVIDDVKKMPESATNGIVLRKRLQLMMYNNMYRIMFDRRFESEDDPLFNKLKALNGERSRLAQSFEYNYGDFIPILRPFLRGYLKICKEVKQRRLQLFKDYFVDERKKLSTTTKSMDNNALKCAIDHILEAEQKGEINEDNVLYIVENINVAAIETTLWSIEWGIAELVNHPEIQKKLRDEIDSVLGPGVQITEPHTHKLPYLQAVIKETLRLRMAIPLLVPHMNLHDAKLAGYDIPAESKILVNAWWLANNPATWKRPEEFRPERFFEEEKHVEANGNDFRYLPFGVGRRSCPGIILALPILGITLGRLVQNFELLPPPGQSKLDTTEKGGQFSLHILKHFTIVMKPRSF.

Short sequence motifs (nuclear localization signal) lie at residues 161–168 (VKKMPESA) and 247–254 (QRRLQLFK). Cysteine 448 contributes to the heme binding site.

It belongs to the cytochrome P450 family. Heme is required as a cofactor.

The protein resides in the nucleus. It carries out the reaction (E)-cinnamate + reduced [NADPH--hemoprotein reductase] + O2 = (E)-4-coumarate + oxidized [NADPH--hemoprotein reductase] + H2O + H(+). It participates in phenylpropanoid metabolism; trans-4-coumarate biosynthesis; trans-4-coumarate from trans-cinnamate: step 1/1. In terms of biological role, component of the floral volatile benzenoid/phenylpropanoid (FVBP) biosynthetic pathway that controls carbon flux to pigments essential for pollination or UV protection, to numerous pytoalexins synthesized by plants when challenged by pathogens, and to lignins. The chain is Trans-cinnamate 4-monooxygenase C4H1 from Petunia hybrida (Petunia).